Reading from the N-terminus, the 410-residue chain is Phosphopentomutase (410 aa).

6 residues coordinate Mn(2+): D10, D309, H314, D350, H351, and H362.

This sequence belongs to the phosphopentomutase family. Requires Mn(2+) as cofactor.

It localises to the cytoplasm. It catalyses the reaction 2-deoxy-alpha-D-ribose 1-phosphate = 2-deoxy-D-ribose 5-phosphate. The enzyme catalyses alpha-D-ribose 1-phosphate = D-ribose 5-phosphate. Its pathway is carbohydrate degradation; 2-deoxy-D-ribose 1-phosphate degradation; D-glyceraldehyde 3-phosphate and acetaldehyde from 2-deoxy-alpha-D-ribose 1-phosphate: step 1/2. In terms of biological role, isomerase that catalyzes the conversion of deoxy-ribose 1-phosphate (dRib-1-P) and ribose 1-phosphate (Rib-1-P) to deoxy-ribose 5-phosphate (dRib-5-P) and ribose 5-phosphate (Rib-5-P), respectively. The polypeptide is Phosphopentomutase (Aliivibrio fischeri (strain ATCC 700601 / ES114) (Vibrio fischeri)).